A 575-amino-acid chain; its full sequence is Eukaryotic translation initiation factor 3 subunit D (575 aa).

2 disordered regions span residues 36–66 (PYSKGDKLGRMADWTEGKDRERGGRQQYGNR) and 103–177 (STRT…DASV). The segment covering 39–59 (KGDKLGRMADWTEGKDRERGG) has biased composition (basic and acidic residues). Residues 109-144 (FGRGGGTVFGRGRGQRGGQAQRGGRGTFQRVGGRGG) show a composition bias toward gly residues. The span at 163-174 (GWRDDKPQRNRD) shows a compositional bias: basic and acidic residues. Residues 302–316 (NLDMVTVNENAADAP) are RNA gate.

Belongs to the eIF-3 subunit D family. As to quaternary structure, component of the eukaryotic translation initiation factor 3 (eIF-3) complex.

It localises to the cytoplasm. MRNA cap-binding component of the eukaryotic translation initiation factor 3 (eIF-3) complex, which is involved in protein synthesis of a specialized repertoire of mRNAs and, together with other initiation factors, stimulates binding of mRNA and methionyl-tRNAi to the 40S ribosome. The eIF-3 complex specifically targets and initiates translation of a subset of mRNAs involved in cell proliferation. In the eIF-3 complex, eif3d specifically recognizes and binds the 7-methylguanosine cap of a subset of mRNAs. The chain is Eukaryotic translation initiation factor 3 subunit D from Phaeosphaeria nodorum (strain SN15 / ATCC MYA-4574 / FGSC 10173) (Glume blotch fungus).